The primary structure comprises 1218 residues: Protein jagged-1 (1218 aa).

The first 33 residues, M1 to G33, serve as a signal peptide directing secretion. The Extracellular portion of the chain corresponds to Q34–D1067. Residue N143 is glycosylated (N-linked (GlcNAc...) asparagine). Residues V185–C229 enclose the DSL domain. Intrachain disulfides connect C187-C196 and C200-C212. An important for interaction with NOTCH1 region spans residues F199 to F207. Residue N217 is glycosylated (N-linked (GlcNAc...) asparagine). 40 cysteine pairs are disulfide-bonded: C220/C229, C234/C245, C238/C251, C253/C262, C265/C276, C271/C282, C284/C293, C300/C312, C306/C322, C324/C333, C340/C351, C345/C360, C362/C371, C378/C389, C383/C398, C400/C409, C416/C427, C421/C436, C438/C447, C454/C464, C458/C473, C475/C484, C491/C502, C496/C511, C513/C522, C529/C540, C534/C549, C551/C560, C578/C605, C599/C615, C617/C626, C633/C644, C638/C653, C655/C664, C671/C682, C676/C691, C693/C702, C709/C720, C714/C729, and C731/C740. One can recognise an EGF-like 1 domain in the interval N230 to D263. In terms of domain architecture, EGF-like 2; atypical spans K264–D294. 2 consecutive EGF-like domains span residues D296–E334 and A336–S372. The 37-residue stretch at N374–Q410 folds into the EGF-like 5; calcium-binding domain. N382 carries N-linked (GlcNAc...) asparagine glycosylation. The EGF-like 6; calcium-binding domain occupies D412–D448. The EGF-like 7; calcium-binding domain maps to N450–E485. An EGF-like 8; calcium-binding domain is found at D487–Q523. EGF-like domains follow at residues D525–S561 and D586–H627. N559 carries N-linked (GlcNAc...) asparagine glycosylation. Residues N629–E665 form the EGF-like 11; calcium-binding domain. The region spanning N667–H703 is the EGF-like 12; calcium-binding domain. EGF-like domains follow at residues R705–N741 and R744–A780. The N-linked (GlcNAc...) asparagine glycan is linked to N745. 9 disulfides stabilise this stretch: C748–C759, C753–C768, C770–C779, C786–C797, C791–C806, C808–C817, C824–C835, C829–C844, and C846–C855. One can recognise an EGF-like 15; calcium-binding domain in the interval N782 to R818. Residues N820–Q856 enclose the EGF-like 16; calcium-binding domain. N-linked (GlcNAc...) asparagine glycans are attached at residues N960, N991, N1045, and N1064. Residues F1068–L1093 traverse the membrane as a helical segment. At R1094–V1218 the chain is on the cytoplasmic side. Positions H1152–V1218 are disordered. Over residues T1189–K1199 the composition is skewed to polar residues.

As to quaternary structure, interacts with NOTCH2 and NOTCH3. Interacts with NOTCH1 (in the presence of calcium ions). As to expression, widely expressed in adult and fetal tissues. In cervix epithelium expressed in undifferentiated subcolumnar reserve cells and squamous metaplasia. Expression is up-regulated in cervical squamous cell carcinoma. Expressed in bone marrow cell line HS-27a which supports the long-term maintenance of immature progenitor cells.

Its subcellular location is the membrane. It is found in the cell membrane. Its function is as follows. Ligand for multiple Notch receptors and involved in the mediation of Notch signaling. May be involved in cell-fate decisions during hematopoiesis. Seems to be involved in early and late stages of mammalian cardiovascular development. Inhibits myoblast differentiation. Enhances fibroblast growth factor-induced angiogenesis (in vitro). The protein is Protein jagged-1 (JAG1) of Homo sapiens (Human).